Here is a 354-residue protein sequence, read N- to C-terminus: CX3C chemokine receptor 1 (354 aa).

At Met-1–Thr-32 the chain is on the extracellular side. A helical membrane pass occupies residues Ile-33–Ser-60. The Cytoplasmic portion of the chain corresponds to Arg-61–Tyr-70. The chain crosses the membrane as a helical span at residues Leu-71–Tyr-91. The Extracellular portion of the chain corresponds to Leu-92–Lys-104. Cys-103 and Cys-176 form a disulfide bridge. The helical transmembrane segment at Leu-105–Ile-126 threads the bilayer. The Cytoplasmic portion of the chain corresponds to Asp-127–Thr-143. Residues Val-144–Phe-168 traverse the membrane as a helical segment. The Extracellular portion of the chain corresponds to Thr-169–Val-196. Residues Asn-197–Ile-216 form a helical membrane-spanning segment. Over Gln-217–Arg-232 the chain is Cytoplasmic. A helical membrane pass occupies residues Leu-233 to Leu-257. Residues Lys-258–Leu-274 lie on the Extracellular side of the membrane. A helical membrane pass occupies residues Ala-275–Gly-298. Over Glu-299–Leu-354 the chain is Cytoplasmic. At Thr-345 the chain carries Phosphothreonine.

Belongs to the G-protein coupled receptor 1 family. Found in a ternary complex with CX3CL1 and ITGAV:ITGB3 or ITGA4:ITGB1. In terms of processing, this protein is not N-glycosylated which is unusual for G-protein-coupled receptors. Specifically expressed in subsets of leukocytes: expressed in monocytes, subsets of T-cells and natural killer (NK) cells in the circulation, dendritic cells, as well as in microglia in the central nervous system (CNS). Expression level subdivides blood monocytes into two major functional subsets; CD14(+)CD16(-)-CX3CR1(low) inflammatory monocytes and CD14(low)CD16(+)CX3CR1(high) homeostatic monocytes. Expressed in myeloid-derived mucosal dendritic cells, which populate the entire lamina propria of the small intestine.

The protein localises to the cell membrane. Functionally, receptor for the C-X3-C chemokine fractalkine (CX3CL1) present on many early leukocyte cells; CX3CR1-CX3CL1 signaling exerts distinct functions in different tissue compartments, such as immune response, inflammation, cell adhesion and chemotaxis. CX3CR1-CX3CL1 signaling mediates cell migratory functions. Responsible for the recruitment of natural killer (NK) cells to inflamed tissues. Acts as a regulator of inflammation process leading to atherogenesis by mediating macrophage and monocyte recruitment to inflamed atherosclerotic plaques, promoting cell survival. Involved in airway inflammation by promoting interleukin 2-producing T helper (Th2) cell survival in inflamed lung. Involved in the migration of circulating monocytes to non-inflamed tissues, where they differentiate into macrophages and dendritic cells. Acts as a negative regulator of angiogenesis, probably by promoting macrophage chemotaxis. Plays a key role in brain microglia by regulating inflammatory response in the central nervous system (CNS) and regulating synapse maturation. Required to restrain the microglial inflammatory response in the CNS and the resulting parenchymal damage in response to pathological stimuli. Involved in brain development by participating in synaptic pruning, a natural process during which brain microglia eliminates extra synapses during postnatal development. Synaptic pruning by microglia is required to promote the maturation of circuit connectivity during brain development. Acts as an important regulator of the gut microbiota by controlling immunity to intestinal bacteria and fungi. Expressed in lamina propria dendritic cells in the small intestine, which form transepithelial dendrites capable of taking up bacteria in order to provide defense against pathogenic bacteria. Required to initiate innate and adaptive immune responses against dissemination of commensal fungi (mycobiota) component of the gut: expressed in mononuclear phagocytes (MNPs) and acts by promoting induction of antifungal IgG antibodies response to confer protection against disseminated C.albicans or C.auris infection. Also acts as a receptor for C-C motif chemokine CCL26, inducing cell chemotaxis. This chain is CX3C chemokine receptor 1, found in Mus musculus (Mouse).